Here is a 353-residue protein sequence, read N- to C-terminus: Glucose import ATP-binding protein GlcV (353 aa).

The 238-residue stretch at 4-241 folds into the ABC transporter domain; that stretch reads IIVKNVSKVF…PVSIQVASLI (238 aa). Residues 40-46, Gln-89, and Glu-166 contribute to the ATP site; that span reads SGAGKTT.

This sequence belongs to the ABC transporter superfamily. As to quaternary structure, the complex is composed of two ATP-binding proteins (GlcV), two transmembrane proteins (GlcT and GlcU) and a solute-binding protein (GlcS). Forms transient head-to-tail homodimers in the presence of ATP-Mg(2+).

The protein localises to the cell membrane. The catalysed reaction is D-glucose(out) + ATP + H2O = D-glucose(in) + ADP + phosphate + H(+). Part of the ABC transporter complex GlcSTUV involved in glucose uptake. Responsible for energy coupling to the transport system. In vitro, as a free subunit, exhibits a constitutive ATPase activity. The protein is Glucose import ATP-binding protein GlcV of Saccharolobus solfataricus (strain ATCC 35092 / DSM 1617 / JCM 11322 / P2) (Sulfolobus solfataricus).